The sequence spans 99 residues: Putative regulatory protein Kole_1849 (99 aa).

Belongs to the RemA family.

This is Putative regulatory protein Kole_1849 from Kosmotoga olearia (strain ATCC BAA-1733 / DSM 21960 / TBF 19.5.1).